The primary structure comprises 115 residues: CRISPR-associated endoribonuclease Cas2 (115 aa).

D22 contributes to the Mg(2+) binding site.

It belongs to the CRISPR-associated endoribonuclease Cas2 protein family. In terms of assembly, homodimer, forms a heterotetramer with a Cas1 homodimer. It depends on Mg(2+) as a cofactor.

In terms of biological role, CRISPR (clustered regularly interspaced short palindromic repeat), is an adaptive immune system that provides protection against mobile genetic elements (viruses, transposable elements and conjugative plasmids). CRISPR clusters contain sequences complementary to antecedent mobile elements and target invading nucleic acids. CRISPR clusters are transcribed and processed into CRISPR RNA (crRNA). Functions as a ssRNA-specific endoribonuclease. Involved in the integration of spacer DNA into the CRISPR cassette. This is CRISPR-associated endoribonuclease Cas2 from Flavobacterium psychrophilum (strain ATCC 49511 / DSM 21280 / CIP 103535 / JIP02/86).